We begin with the raw amino-acid sequence, 206 residues long: Uridine kinase (206 aa).

9-16 (GGSGSGKT) is an ATP binding site.

It belongs to the uridine kinase family.

It is found in the cytoplasm. The catalysed reaction is uridine + ATP = UMP + ADP + H(+). It carries out the reaction cytidine + ATP = CMP + ADP + H(+). Its pathway is pyrimidine metabolism; CTP biosynthesis via salvage pathway; CTP from cytidine: step 1/3. It functions in the pathway pyrimidine metabolism; UMP biosynthesis via salvage pathway; UMP from uridine: step 1/1. The sequence is that of Uridine kinase from Borrelia duttonii (strain Ly).